Consider the following 50-residue polypeptide: Omwaprin-a (50 aa).

A WAP domain is found at 3–47 (RPKKPGLCPPRPQKPCVKECKNDDSCPGQQKCCNYGCKDECRDPI). 4 disulfides stabilise this stretch: C10–C35, C18–C39, C22–C34, and C28–C43.

Belongs to the venom waprin family. In terms of tissue distribution, expressed by the venom gland.

The protein localises to the secreted. Functionally, damages membranes of susceptible bacteria. Has antibacterial activity against the Gram-positive bacteria B.megaterium and S.warneri. After a 45-minute treatment with this protein, B.megaterium have no visible pili and are smooth. Has no antibacterial activity against the Gram-positive bacteria B.thuringiensis, S.aureus, S.clavuligerus and B.anthracis, or the Gram-negative bacteria E.coli and A.tumefaciens. Has no hemolytic activity. Does not inhibit the proteinases elastase and cathepsin G. Is not toxic to mice. The sequence is that of Omwaprin-a from Oxyuranus microlepidotus (Inland taipan).